We begin with the raw amino-acid sequence, 154 residues long: uncharacterized protein (154 aa).

Positions 91-154 (PSEESWGCRQ…WGSPQPSRGA (64 aa)) are disordered. Residues 134-154 (SRDTSPLGGQSWGSPQPSRGA) are compositionally biased toward polar residues.

This is an uncharacterized protein from Homo sapiens (Human).